The following is a 938-amino-acid chain: Kinesin-like protein KIN-7B (938 aa).

A Kinesin motor domain is found at 29-348 (KILVTVRMRP…LSFAMSAKEV (320 aa)). Residue 113–120 (GQTSSGKT) participates in ATP binding. A coiled-coil region spans residues 357–431 (VVSEKKLLKH…DLERKAKERK (75 aa)). Residues 450-481 (TKEESIPSKSVPSSRRTARDRRKDNVRQSLTS) are disordered. Residues 555–590 (KANLKEEINRLNSQEIAALEKKLECVQNTIDMLVSS) adopt a coiled-coil conformation. The interval 628–678 (CSPLSGTENKDPESNVVSANSAPVSFGATPPKRDDNRCRTQSREGTPVSRQ) is disordered. The span at 641–652 (SNVVSANSAPVS) shows a compositional bias: low complexity. The span at 658 to 669 (PKRDDNRCRTQS) shows a compositional bias: basic and acidic residues.

Belongs to the TRAFAC class myosin-kinesin ATPase superfamily. Kinesin family. KIN-7 subfamily. In terms of assembly, interacts with ANP3. Interacts with TIO/FU. In terms of tissue distribution, expressed in roots, stems, flowers, pollen mother cells and embryos.

The protein localises to the cytoplasm. The protein resides in the cytoskeleton. Its subcellular location is the phragmoplast. In terms of biological role, probable plus end-directed motor protein that functions in the NACK-PQR (ANP3-MKK6-MPK4) MAP kinase signaling pathway, which is essential for somatic cell cytokinesis, especially for the cell-plate formation and its expansion. May regulate the activity and the localization of ANP3, probably by association through the non-catalytic region of the kinase. Functionally redundant with NACK1 and essential to promote the progression of cytokinesis and for cellularization (formation of the cell plate) during microgametogenesis and megagametogenesis. The sequence is that of Kinesin-like protein KIN-7B from Arabidopsis thaliana (Mouse-ear cress).